We begin with the raw amino-acid sequence, 184 residues long: ATP synthase subunit delta (184 aa).

The protein belongs to the ATPase delta chain family. In terms of assembly, F-type ATPases have 2 components, F(1) - the catalytic core - and F(0) - the membrane proton channel. F(1) has five subunits: alpha(3), beta(3), gamma(1), delta(1), epsilon(1). F(0) has three main subunits: a(1), b(2) and c(10-14). The alpha and beta chains form an alternating ring which encloses part of the gamma chain. F(1) is attached to F(0) by a central stalk formed by the gamma and epsilon chains, while a peripheral stalk is formed by the delta and b chains.

The protein resides in the cell inner membrane. F(1)F(0) ATP synthase produces ATP from ADP in the presence of a proton or sodium gradient. F-type ATPases consist of two structural domains, F(1) containing the extramembraneous catalytic core and F(0) containing the membrane proton channel, linked together by a central stalk and a peripheral stalk. During catalysis, ATP synthesis in the catalytic domain of F(1) is coupled via a rotary mechanism of the central stalk subunits to proton translocation. In terms of biological role, this protein is part of the stalk that links CF(0) to CF(1). It either transmits conformational changes from CF(0) to CF(1) or is implicated in proton conduction. This Caulobacter vibrioides (strain NA1000 / CB15N) (Caulobacter crescentus) protein is ATP synthase subunit delta.